Consider the following 101-residue polypeptide: Gastrin (101 aa).

Residues 1–21 (MPRLCVYMLVLVLALATFSEA) form the signal peptide. Positions 23 to 101 (WKPRSQLQDA…FGRRSAEEDQ (79 aa)) are disordered. The segment covering 25–37 (PRSQLQDASSGPG) has biased composition (polar residues). Tyr-87 is modified (sulfotyrosine). Phe-92 bears the Phenylalanine amide mark. The span at 92–101 (FGRRSAEEDQ) shows a compositional bias: basic and acidic residues. Ser-96 bears the Phosphoserine mark. A propeptide spanning residues 96 to 101 (SAEEDQ) is cleaved from the precursor.

It belongs to the gastrin/cholecystokinin family. Sulfation enhances proteolytic processing, and blocks peptide degradation. Levels of sulfation differ between proteolytically-cleaved gastrins and between tissues. As to expression, abundantly expressed in the stomach and duodenum. Low levels in brain, ovary and pancreas.

It is found in the secreted. Functionally, gastrin stimulates the stomach mucosa to produce and secrete hydrochloric acid and the pancreas to secrete its digestive enzymes. It also stimulates smooth muscle contraction and increases blood circulation and water secretion in the stomach and intestine. This is Gastrin (Gast) from Mus musculus (Mouse).